Reading from the N-terminus, the 388-residue chain is Carbohydrate sulfotransferase 4 (388 aa).

Residues 1 to 7 (MMLLKKG) are Cytoplasmic-facing. Residues 8–28 (RLLMFLGSQVIVVALFIHMSV) traverse the membrane as a helical; Signal-anchor for type II membrane protein segment. Over 29–388 (HRHLSQREES…HILGQVFREG (360 aa)) the chain is Lumenal. 3'-phosphoadenylyl sulfate contacts are provided by residues 50–56 (WRSGSSF) and 204–212 (RDPRAVFRS). N-linked (GlcNAc...) asparagine glycans are attached at residues Asn307, Asn328, and Asn369.

This sequence belongs to the sulfotransferase 1 family. Gal/GlcNAc/GalNAc subfamily. As to quaternary structure, monomer. In terms of tissue distribution, specifically expressed in high endothelial venules (HEV) of peripheral lymph nodes.

It is found in the golgi apparatus membrane. It carries out the reaction 3-O-{N-acetyl-beta-D-glucosaminyl-(1-&gt;3)-beta-D-galactosyl-(1-&gt;3)-N-acetyl-alpha-D-galactosaminyl}-L-threonyl-[protein] + 3'-phosphoadenylyl sulfate = 3-O-{6-O-sulfo-N-acetyl-beta-D-glucosaminyl-(1-&gt;3)-beta-D-galactosyl-(1-&gt;3)-N-acetyl-alpha-D-galactosaminyl}-L-threonyl-[protein] + adenosine 3',5'-bisphosphate + H(+). The enzyme catalyses 3-O-{N-acetyl-beta-D-glucosaminyl-(1-&gt;3)-beta-D-galactosyl-(1-&gt;3)-N-acetyl-alpha-D-galactosaminyl}-L-seryl-[protein] + 3'-phosphoadenylyl sulfate = 3-O-{6-O-sulfo-N-acetyl-beta-D-glucosaminyl-(1-&gt;3)-beta-D-galactosyl-(1-&gt;3)-N-acetyl-alpha-D-galactosaminyl}-L-seryl-[protein] + adenosine 3',5'-bisphosphate + H(+). It catalyses the reaction a 3-O-{beta-D-galactosyl-(1-&gt;3)-[N-acetyl-beta-D-glucosaminyl-(1-&gt;6)]-N-acetyl-alpha-D-galactosaminyl}-L-threonyl-[protein] + 3'-phosphoadenylyl sulfate = 3-O-{beta-D-galactosyl-(1-&gt;3)-[6-O-sulfo-N-acetyl-beta-D-glucosaminyl-(1-&gt;6)]-N-acetyl-alpha-D-galactosaminyl}-L-threonyl-[protein] + adenosine 3',5'-bisphosphate + H(+). The catalysed reaction is 3-O-{beta-D-galactosyl-(1-&gt;3)-[N-acetyl-beta-D-glucosaminyl-(1-&gt;6)]-N-acetyl-alpha-D-galactosaminyl}-L-seryl-[protein] + 3'-phosphoadenylyl sulfate = 3-O-{beta-D-galactosyl-(1-&gt;3)-[6-O-sulfo-N-acetyl-beta-D-glucosaminyl-(1-&gt;6)]-N-acetyl-alpha-D-galactosaminyl}-L-seryl-[protein] + adenosine 3',5'-bisphosphate + H(+). It functions in the pathway protein modification; carbohydrate sulfation. Sulfotransferase involved in SELL/L-selectin ligand biosynthesis pathway. Catalyzes the transfer of the sulfate group from 3'-phospho-5'-adenylyl sulfate (PAPS) onto the hydroxyl group at C-6 position of the non-reducing N-acetylglucosamine (GlcNAc) residue within O-linked mucin-type glycans. Contributes to generate sialyl 6-sulfo Lewis X determinant (also known as MECA-79 epitope) for SELL recognition, a prerequisite for continuous lymphocyte homing into peripheral lymph nodes and antigen immune surveillance. Transfers the sulfate group primarily on core 2 GlcNAcbeta1-6(Galbeta1-3)GalNAcalphaSer/Thr and extended core 1 GlcNAcbeta1-3Galbeta1-3GalNAcalphaSer/Thr based O-linked glycans on CD34 and GLYCAM1 peripheral node addressins (PNAds) expressed on the lumenal side of high endothelial venules (HEVs). The recognition of PNAds by SELL initiates a multistep process comprising tethering and rolling of blood lymphocytes on HEVs against the blood flow, followed by chemokine signaling, integrin-mediated lymphocyte adhesion onto endothelial cells and lymphocyte transendothelial migration. Modulates rolling velocity and differential T and B lymphocyte recruitment into peripheral lymph nodes, with a major role in B lymphocyte homing. Might be redundant in sulfation of MADCAM1 and lymphocyte trafficking to mesenteric lymph nodes. Can also sulfonate core 3 GlcNAcbeta1-3GalNAc-R based glycans as well as GlcNAcbeta1-3Galbeta1-Glc, GlcNAcbeta1-6ManOMe and GlcNAcbeta1-2Man oligosaccharides, which might be ectopically expressed during tumorigenesis. The protein is Carbohydrate sulfotransferase 4 (Chst4) of Mus musculus (Mouse).